Here is an 89-residue protein sequence, read N- to C-terminus: Large ribosomal subunit protein eL34 (89 aa).

This sequence belongs to the eukaryotic ribosomal protein eL34 family.

The sequence is that of Large ribosomal subunit protein eL34 (rpl34e) from Methanocaldococcus jannaschii (strain ATCC 43067 / DSM 2661 / JAL-1 / JCM 10045 / NBRC 100440) (Methanococcus jannaschii).